The primary structure comprises 372 residues: Queuine tRNA-ribosyltransferase (372 aa).

The active-site Proton acceptor is the D92. Residues D92–F96, D146, Q188, and G215 each bind substrate. The tract at residues G246–E252 is RNA binding. Residue D265 is the Nucleophile of the active site. An RNA binding; important for wobble base 34 recognition region spans residues T270 to R274. Zn(2+)-binding residues include C303, C305, C308, and H334.

It belongs to the queuine tRNA-ribosyltransferase family. Homodimer. Within each dimer, one monomer is responsible for RNA recognition and catalysis, while the other monomer binds to the replacement base PreQ1. The cofactor is Zn(2+).

It carries out the reaction 7-aminomethyl-7-carbaguanine + guanosine(34) in tRNA = 7-aminomethyl-7-carbaguanosine(34) in tRNA + guanine. Its pathway is tRNA modification; tRNA-queuosine biosynthesis. In terms of biological role, catalyzes the base-exchange of a guanine (G) residue with the queuine precursor 7-aminomethyl-7-deazaguanine (PreQ1) at position 34 (anticodon wobble position) in tRNAs with GU(N) anticodons (tRNA-Asp, -Asn, -His and -Tyr). Catalysis occurs through a double-displacement mechanism. The nucleophile active site attacks the C1' of nucleotide 34 to detach the guanine base from the RNA, forming a covalent enzyme-RNA intermediate. The proton acceptor active site deprotonates the incoming PreQ1, allowing a nucleophilic attack on the C1' of the ribose to form the product. After dissociation, two additional enzymatic reactions on the tRNA convert PreQ1 to queuine (Q), resulting in the hypermodified nucleoside queuosine (7-(((4,5-cis-dihydroxy-2-cyclopenten-1-yl)amino)methyl)-7-deazaguanosine). This is Queuine tRNA-ribosyltransferase from Prochlorococcus marinus (strain MIT 9313).